Consider the following 293-residue polypeptide: MSSTYKATGINLKAMPLGESDRLLTILTREYGLIRVVAPGARKPRSSLGGRSGLFVVNELLIAPGRSLHKLSQAETLTSYARLSKHLSTLTASQYLAELVIYQALSEQPQVELFDLLCYYLSWLEQSPEQEVLAVLSRAVFHLLEWAGIAPQVQQCCLTRRPITPDYTDPDWRIGFSCRAGGTVTSLAEALSLPASELQSTPAVPSRSAPALEHPHVYLTAIELEVLQHLSTSLPSSPTVSWSDLPPPSHYPTWVWLAIERTLRQYIQSYLDRPIRSAVLMDACFSPLSPAFS.

This sequence belongs to the RecO family.

Functionally, involved in DNA repair and RecF pathway recombination. This Cyanothece sp. (strain PCC 7425 / ATCC 29141) protein is DNA repair protein RecO.